Consider the following 878-residue polypeptide: Phosphoenolpyruvate carboxylase (878 aa).

Catalysis depends on residues histidine 137 and lysine 545.

Belongs to the PEPCase type 1 family. It depends on Mg(2+) as a cofactor.

The catalysed reaction is oxaloacetate + phosphate = phosphoenolpyruvate + hydrogencarbonate. Forms oxaloacetate, a four-carbon dicarboxylic acid source for the tricarboxylic acid cycle. The chain is Phosphoenolpyruvate carboxylase from Yersinia pseudotuberculosis serotype O:1b (strain IP 31758).